Consider the following 489-residue polypeptide: Aspartyl/glutamyl-tRNA(Asn/Gln) amidotransferase subunit B (489 aa).

This sequence belongs to the GatB/GatE family. GatB subfamily. In terms of assembly, heterotrimer of A, B and C subunits.

The catalysed reaction is L-glutamyl-tRNA(Gln) + L-glutamine + ATP + H2O = L-glutaminyl-tRNA(Gln) + L-glutamate + ADP + phosphate + H(+). It carries out the reaction L-aspartyl-tRNA(Asn) + L-glutamine + ATP + H2O = L-asparaginyl-tRNA(Asn) + L-glutamate + ADP + phosphate + 2 H(+). In terms of biological role, allows the formation of correctly charged Asn-tRNA(Asn) or Gln-tRNA(Gln) through the transamidation of misacylated Asp-tRNA(Asn) or Glu-tRNA(Gln) in organisms which lack either or both of asparaginyl-tRNA or glutaminyl-tRNA synthetases. The reaction takes place in the presence of glutamine and ATP through an activated phospho-Asp-tRNA(Asn) or phospho-Glu-tRNA(Gln). This is Aspartyl/glutamyl-tRNA(Asn/Gln) amidotransferase subunit B from Polynucleobacter asymbioticus (strain DSM 18221 / CIP 109841 / QLW-P1DMWA-1) (Polynucleobacter necessarius subsp. asymbioticus).